A 168-amino-acid polypeptide reads, in one-letter code: Photosystem I assembly protein Ycf3 (168 aa).

TPR repeat units lie at residues 35 to 68 (AFTYYRDGMSAQSEGNYAEALQNYYEAMRLEIDP), 72 to 105 (SYILYNIGLIHTSNGEHTKALEYYFRALERNPFL), and 120 to 153 (GEQAIRQGDSEIAEAWFDQAAEYWKQAIALTPGN).

It belongs to the Ycf3 family.

It is found in the plastid. The protein localises to the chloroplast thylakoid membrane. Functionally, essential for the assembly of the photosystem I (PSI) complex. May act as a chaperone-like factor to guide the assembly of the PSI subunits. The polypeptide is Photosystem I assembly protein Ycf3 (Populus alba (White poplar)).